Consider the following 530-residue polypeptide: MNLVNKAEKTFALTTPLYYVNDVPHIGSAYTTMAADAVARFQKLLGRDVLLITGTDEHGQKIQRSAESLGKAPQEFCDEIVPSFMSLWRLLNIQYDRFSRTTAVRHKAIVDEFFARVWEAGDIYQGQQKGWYCVSCEEFKEERELLEGNRCPIHVNKEVEWRDEQNYFFRLSKYQTQLEEFYQSHPDFIQPESRRNEVLNFVSQGLQDFSISRVNLDWGFPVPNDPKHTLYVWFDALLAYVTALLDPEDEPTLENALGKWWPINLHLIGKDILRFHAVYWPAMLLSAGLPLPDRVFGHGFLTKDGQKMGKSLGNTVDPVGLVQQYGSDAVRYYFLKEIEFGKDGDFNEVRFIHVLNADLANDLGNLLNRTLNMVKKYCANYALSITNEDIPAENTLKALGVDLGAKVKQAYEVLAFNQACGVVLSLVQASNKFIDDQAPWSLYKQERQQEVETVLYTVLESVRLAAYLLSPVIPNISSNIYQQLGFGINFNEQTDITPFAIHAQWGLLSNKQQLGQPQPIFKRIEQTKNV.

Residues 18–28 carry the 'HIGH' region motif; sequence YYVNDVPHIGS. Residues cysteine 133, cysteine 136, cysteine 151, and histidine 154 each coordinate Zn(2+). The 'KMSKS' region signature appears at 307–311; that stretch reads KMGKS. Lysine 310 provides a ligand contact to ATP.

This sequence belongs to the class-I aminoacyl-tRNA synthetase family. MetG type 2A subfamily. In terms of assembly, monomer. It depends on Zn(2+) as a cofactor.

The protein resides in the cytoplasm. The catalysed reaction is tRNA(Met) + L-methionine + ATP = L-methionyl-tRNA(Met) + AMP + diphosphate. Is required not only for elongation of protein synthesis but also for the initiation of all mRNA translation through initiator tRNA(fMet) aminoacylation. This is Methionine--tRNA ligase from Nostoc sp. (strain PCC 7120 / SAG 25.82 / UTEX 2576).